Reading from the N-terminus, the 112-residue chain is Protein Churchill (112 aa).

Residues Cys2, Cys5, Cys30, Cys33, His59, Cys61, Cys64, His66, His71, Cys88, and Cys91 each coordinate Zn(2+).

Belongs to the Churchill family.

In terms of biological role, transcriptional activator that mediates FGF signaling during neural development. Plays a role in the regulation of cell movement. Does not bind DNA by itself. This chain is Protein Churchill (Churc1), found in Mus musculus (Mouse).